Reading from the N-terminus, the 276-residue chain is Arginine and glutamate-rich protein 1 (276 aa).

Composition is skewed to basic residues over residues 1–30 and 38–59; these read MGRS…RSRS and ARKR…RSRS. The necessary and sufficient for RNA binding stretch occupies residues 1-77; that stretch reads MGRSRSRSSS…RRDRERERER (77 aa). Residues 1–117 form a disordered region; sequence MGRSRSRSSS…EKKAEFERQR (117 aa). Basic and acidic residues-rich tracts occupy residues 67 to 87 and 96 to 117; these read SRRD…RIDI and SSLD…ERQR. Positions 78 to 276 are necessary and sufficient for transcriptional regulation; sequence ASSPPDRIDI…KLSFSLKSQD (199 aa). The LXXLL motif 1; degenerate signature appears at 175-179; that stretch reads LLEEL. Positions 204–208 match the LXXLL motif 2; degenerate motif; that stretch reads LERIL. Over residues 240–256 the composition is skewed to basic and acidic residues; the sequence is RMKLEQERQRQQKEEQK. The tract at residues 240–276 is disordered; the sequence is RMKLEQERQRQQKEEQKIILGKGKSRPKLSFSLKSQD.

Belongs to the ARGLU1 family.

It is found in the nucleus. It localises to the nucleus speckle. The protein resides in the chromosome. Its function is as follows. Dual function regulator of gene expression; regulator of transcription and modulator of alternative splicing. General coactivator of nuclear receptor-induced gene expression. In Gallus gallus (Chicken), this protein is Arginine and glutamate-rich protein 1 (ARGLU1).